The sequence spans 149 residues: Nucleoside diphosphate kinase (149 aa).

Residues Lys9, Phe57, Arg85, Thr91, Arg102, and Asn112 each contribute to the ATP site. His115 acts as the Pros-phosphohistidine intermediate in catalysis.

The protein belongs to the NDK family. Mg(2+) is required as a cofactor.

The protein resides in the cytoplasm. The enzyme catalyses a 2'-deoxyribonucleoside 5'-diphosphate + ATP = a 2'-deoxyribonucleoside 5'-triphosphate + ADP. It carries out the reaction a ribonucleoside 5'-diphosphate + ATP = a ribonucleoside 5'-triphosphate + ADP. Functionally, major role in the synthesis of nucleoside triphosphates other than ATP. The ATP gamma phosphate is transferred to the NDP beta phosphate via a ping-pong mechanism, using a phosphorylated active-site intermediate. The sequence is that of Nucleoside diphosphate kinase from Methanosarcina barkeri (strain Fusaro / DSM 804).